Here is a 524-residue protein sequence, read N- to C-terminus: GMP synthase [glutamine-hydrolyzing] (524 aa).

The Glutamine amidotransferase type-1 domain maps to 5–195; that stretch reads KVIVIDFGGQ…VRGVCGCAGT (191 aa). C82 (nucleophile) is an active-site residue. Catalysis depends on residues H169 and E171. A GMPS ATP-PPase domain is found at 196–389; sequence WKMDAFVENT…LGIPEHLVFR (194 aa). Position 223-229 (223-229) interacts with ATP; the sequence is SGGVDSS.

Homodimer.

It catalyses the reaction XMP + L-glutamine + ATP + H2O = GMP + L-glutamate + AMP + diphosphate + 2 H(+). Its pathway is purine metabolism; GMP biosynthesis; GMP from XMP (L-Gln route): step 1/1. In terms of biological role, catalyzes the synthesis of GMP from XMP. In Lachnospira eligens (strain ATCC 27750 / DSM 3376 / VPI C15-48 / C15-B4) (Eubacterium eligens), this protein is GMP synthase [glutamine-hydrolyzing].